A 489-amino-acid polypeptide reads, in one-letter code: Glutamyl-tRNA(Gln) amidotransferase subunit A (489 aa).

Residues lysine 77 and serine 152 each act as charge relay system in the active site. Serine 176 serves as the catalytic Acyl-ester intermediate.

It belongs to the amidase family. GatA subfamily. Heterotrimer of A, B and C subunits.

It catalyses the reaction L-glutamyl-tRNA(Gln) + L-glutamine + ATP + H2O = L-glutaminyl-tRNA(Gln) + L-glutamate + ADP + phosphate + H(+). Allows the formation of correctly charged Gln-tRNA(Gln) through the transamidation of misacylated Glu-tRNA(Gln) in organisms which lack glutaminyl-tRNA synthetase. The reaction takes place in the presence of glutamine and ATP through an activated gamma-phospho-Glu-tRNA(Gln). The protein is Glutamyl-tRNA(Gln) amidotransferase subunit A of Levilactobacillus brevis (strain ATCC 367 / BCRC 12310 / CIP 105137 / JCM 1170 / LMG 11437 / NCIMB 947 / NCTC 947) (Lactobacillus brevis).